Reading from the N-terminus, the 509-residue chain is Photosystem II CP47 reaction center protein (509 aa).

6 helical membrane-spanning segments follow: residues 21–36 (SVHI…WAGS), 101–115 (IVFS…IWHW), 140–156 (GIHL…FGAF), 203–218 (IAAG…FHLS), 237–252 (VLSS…AFVV), and 457–472 (SFAL…HGAR).

This sequence belongs to the PsbB/PsbC family. PsbB subfamily. In terms of assembly, PSII is composed of 1 copy each of membrane proteins PsbA, PsbB, PsbC, PsbD, PsbE, PsbF, PsbH, PsbI, PsbJ, PsbK, PsbL, PsbM, PsbT, PsbX, PsbY, PsbZ, Psb30/Ycf12, at least 3 peripheral proteins of the oxygen-evolving complex and a large number of cofactors. It forms dimeric complexes. It depends on Binds multiple chlorophylls. PSII binds additional chlorophylls, carotenoids and specific lipids. as a cofactor.

The protein localises to the plastid. The protein resides in the chloroplast thylakoid membrane. Functionally, one of the components of the core complex of photosystem II (PSII). It binds chlorophyll and helps catalyze the primary light-induced photochemical processes of PSII. PSII is a light-driven water:plastoquinone oxidoreductase, using light energy to abstract electrons from H(2)O, generating O(2) and a proton gradient subsequently used for ATP formation. The protein is Photosystem II CP47 reaction center protein of Cicer arietinum (Chickpea).